A 6781-amino-acid chain; its full sequence is Replicase polyprotein 1ab (6781 aa).

A CoV Nsp1 globular domain is found at 2–109 (ASNHVTLAFA…ELELTFGRRG (108 aa)). SsDNA is bound by residues Glu59, Asn95, Glu99, and Glu102. Residues 112 to 364 (IVPVDQYMCG…TKLKFDILSG (253 aa)) form the CoV Nsp2 N-terminal domain. A CoV Nsp2 middle domain is found at 383–776 (SALVDIVDDA…AEMYNTYLST (394 aa)). Residues 778–895 (VENLVLAGVS…VPICFKKKGG (118 aa)) form the CoV Nsp2 C-terminal domain. Residues 896–991 (GDVKFSDEVS…VMVSQWPLND (96 aa)) form the Ubiquitin-like 1 domain. The segment at 1009 to 1040 (IDSEGDEVDSSAPEKVADVANSEPGDDGLPVA) is disordered. Residues 1057–1296 (SFIKDTPSTV…EPVVKPFYSY (240 aa)) form the Peptidase C16 1 domain. The active-site For PL1-PRO activity is Cys1091. A C4-type 1; degenerate zinc finger spans residues 1162 to 1193 (CGCGTGERIYEGCAFRMTPTLEPFPYGACAQC). Residues His1239 and Asp1252 each act as for PL1-PRO activity in the active site. In terms of domain architecture, Macro spans 1297-1465 (KNVDFYQGDF…IFKEALVDTT (169 aa)). Positions 1630-1685 (NKSVVIKVTEDTRSVKAVKVESTATYGQQIGPCLVNDTVVTDNKPVVADVVAKVVP) constitute a Ubiquitin-like 2 domain. Residues 1691–1951 (SHYGFDKAGE…LLDTMNYASE (261 aa)) form the Peptidase C16 2 domain. The For PL2-PRO activity role is filled by Cys1729. The segment at 1808–1838 (DGCCCSKRVVTAPVVNASVLKLGVEDGLCPH) adopts a C4-type 2; degenerate zinc-finger fold. Catalysis depends on for PL2-PRO activity residues His1888 and Asp1901. 2 helical membrane-spanning segments follow: residues 1959–1979 (FMSR…GLCF) and 2022–2042 (WFKV…LLFM). Residues 1959–2170 (FMSRNLITVF…FGDEIVVFFI (212 aa)) form an HD1 region. The 3Ecto domain maps to 2038–2102 (ALLFMTIRFT…TQVVWQHLRD (65 aa)). Cystine bridges form between Cys2054-Cys2080 and Cys2072-Cys2077. 3 helical membrane-spanning segments follow: residues 2105–2125 (IGNV…GVYV), 2127–2147 (AITL…LGLQ), and 2150–2170 (IWFL…VFFI). The interval 2176–2266 (MFIKHVCLGC…VVKLNVQPTG (91 aa)) is Y1. One can recognise a CoV Nsp3 Y domain in the interval 2176–2516 (MFIKHVCLGC…PTVCIANKKG (341 aa)). Positions 2180, 2185, 2190, 2193, 2226, 2229, 2233, and 2236 each coordinate Zn(2+). A ZF1 region spans residues 2180–2193 (HVCLGCDKASCVAC). The segment at 2226–2236 (CKKHNFFCLNC) is ZF2. A Y2 region spans residues 2267 to 2356 (PATILIDKVE…LVDSALLASL (90 aa)). The interval 2267–2516 (PATILIDKVE…PTVCIANKKG (250 aa)) is coV-Y. Residues 2357–2414 (SVDFGASLHSAFVSVLSNSFGKDLSSCNDMQDCKSTLGFDDVPLDTFNAAVAEAHRYD) are Y3. The Y4 stretch occupies residues 2415-2516 (VLLTDMSFNN…PTVCIANKKG (102 aa)). Transmembrane regions (helical) follow at residues 2528 to 2548 (FFWF…FLDF), 2619 to 2639 (IPAG…TIFG), 2654 to 2674 (GACI…TAVY), 2754 to 2774 (GSDF…ISVF), 2787 to 2807 (ILFN…FTKF), 2814 to 2834 (MSVG…SYIV), and 2863 to 2883 (LGFL…VYAF). Residues 2528–2883 (FFWFLCLFIV…PWWVLMVYAF (356 aa)) form an HD2 region. The Nsp4C domain occupies 2902-2997 (LFEGDKFVGS…PTVSYNSTLQ (96 aa)). One can recognise a Peptidase C30 domain in the interval 2998-3299 (AGLRKMAQPS…VRQMYGVNLQ (302 aa)). Residues His3038 and Cys3141 each act as for 3CL-PRO activity in the active site. 7 helical membrane-spanning segments follow: residues 3336-3356 (GYVT…MFTL), 3361-3381 (LFFQ…NLAF), 3399-3419 (LMGF…VTIL), 3431-3451 (PASS…YFYA), 3454-3474 (ILSC…VGAV), 3476-3496 (YKVA…FGDI), and 3500-3520 (MFCY…LYWF). The tract at residues 3336–3520 (GYVTPMFACL…CCFYGILYWF (185 aa)) is HD3. Positions 3580–3662 (SKLTDIKCSN…SYFNDNSMLQ (83 aa)) constitute a RdRp Nsp7 cofactor domain. Residues 3663-3857 (SVASTYVGLP…LGCERIVKLQ (195 aa)) form the RdRp Nsp8 cofactor domain. Residues 3858-3965 (NNEIIPGKLK…GYIGATVRLQ (108 aa)) form the Nsp9 ssRNA-binding domain. Positions 3966-4103 (AGKQTEQAIN…CDRSIMQSTD (138 aa)) constitute an ExoN/MTase coactivator domain. The Zn(2+) site is built by Cys4039, Cys4042, His4048, Cys4055, Cys4081, Cys4084, Cys4092, and Cys4094. Zinc fingers lie at residues 4039 to 4055 (CLYC…DGFC) and 4081 to 4094 (CKVC…GCTC). Residues 4106–4355 (YLNRVRGSSA…ASECFVKSDI (250 aa)) form the NiRAN domain. In terms of domain architecture, Nsp12 Interface spans 4361–4459 (KSYDLLEYDF…WNNDLNLHSS (99 aa)). Zn(2+) contacts are provided by His4390, Cys4396, Cys4401, Cys4405, and Cys4582. The Nsp12 RNA-dependent RNA polymerase domain occupies 4460-5027 (RLSINELLQF…NMYEKSAVLQ (568 aa)). The interval 4462–4676 (SINELLQFCS…HQKHLKSIVN (215 aa)) is rdRp Fingers N-ter. The segment at 4677 to 4715 (TRGASVVIGTTKFYGGWDNMLKNLIDGVENPCLMGWDYP) is rdRp Palm N-ter. The region spanning 4707–4869 (PCLMGWDYPK…CYNNDYASLG (163 aa)) is the RdRp catalytic domain. Residues 4716 to 4774 (KCDRALPNMIRMISAMILGSKHTTCCSSTDRFFRLCNELAQVLTEVVYSNGGFYLKPGG) form a rdRp Fingers C-ter region. Residues His4737, Cys4740, and Cys4741 each coordinate Zn(2+). The interval 4775 to 4910 (TTSGDATTAY…NKGPHEFCSQ (136 aa)) is rdRp Palm C-ter. Catalysis depends on for RNA-directed RNA polymerase activity residues Ser4854, Asp4855, and Asp4856. The interval 4911–5027 (HTMQIVDKEG…NMYEKSAVLQ (117 aa)) is rdRp Thumb. The 113-residue stretch at 5028 to 5140 (SAGLCVVCGS…EDFNRIATSD (113 aa)) folds into the CV ZBD domain. The Zn(2+) site is built by Cys5032, Cys5035, Cys5043, Cys5046, Cys5053, Cys5056, His5060, His5066, Cys5077, Cys5082, Cys5099, and His5102. A (+)RNA virus helicase ATP-binding domain is found at 5275-5466 (STIHKLHPAF…MCALKPDVFL (192 aa)). Residue 5310–5317 (GPPGSGKS) coordinates ATP. Residues 5467 to 5636 (HKCYRCPAEI…EGCGLFKDCS (170 aa)) form the (+)RNA virus helicase C-terminal domain. Residues 5696–5910 (LFCTRDFAMR…RCLAIHDCFV (215 aa)) enclose the ExoN domain. Residues Asp5714, Glu5716, and Glu5815 each act as for exoribonuclease activity in the active site. Zn(2+)-binding residues include Cys5831, Cys5833, Cys5849, His5852, His5880, Cys5884, and His5887. Residues His5891 and Asp5896 each act as for exoribonuclease activity in the active site. Cys5902 contributes to the Zn(2+) binding site. An N7-MTase domain is found at 5919–6140 (YPFIGNEAVI…NLWQTFSNNL (222 aa)). Residue 5954–5960 (DIGNPKG) participates in S-adenosyl-L-methionine binding. The segment at 6031 to 6045 (CNGGSLYVNNHAFHT) is gpppA-binding. Positions 6069, 6086, 6097, and 6100 each coordinate Zn(2+). Residues 6142 to 6202 (GLENIAFNVL…NVAFELYAKR (61 aa)) enclose the Nsp15 N-terminal oligomerization domain. In terms of domain architecture, AV-Nsp11N/CoV-Nsp15M spans 6203-6320 (KVGLTPPITI…IYTRKNGKFE (118 aa)). The NendoU domain occupies 6337–6477 (SPRSDMEKDF…KDHKLQTFYP (141 aa)). Residues His6367, His6382, and Lys6423 each act as for uridylate-specific endoribonuclease activity in the active site. Positions 6481–6777 (ASEWKCGYSM…AICGFSNHLV (297 aa)) constitute a Nidovirus-type SAM-dependent 2'-O-MTase domain. Active-site for 2'-O-methyltransferase residues include Lys6525, Asp6609, Lys6649, and Glu6682.

This sequence belongs to the coronaviruses polyprotein 1ab family. As to quaternary structure, interacts with PL-PRO and nsp6. In terms of assembly, monomer. Homodimer; disulfide-linked. Interacts with nsp8 and nsp12 to form the replication-transcription complex (RTC): nsp12, nsp7, two subunits of nsp8, and up to two subunits of nsp13. Eight copies of nsp7 and eight copies of nsp8 assemble to form a heterohexadecamer dsRNA-encircling ring structure. As to quaternary structure, interacts with nsp7, nsp13 and nsp12 to form the replication-transcription complex (RTC): nsp12, nsp7, two subunits of nsp8, and up to two subunits of nsp13. Eight copies of nsp7 and eight copies of nsp8 assemble to form a heterohexadecamer dsRNA-encircling ring structure. In terms of assembly, homodimer. Forms a dodecamer and interacts with nsp14 and nsp16; these interactions enhance nsp14 and nsp16 enzymatic activities. The cofactor is Mn(2+). Specific enzymatic cleavages in vivo by its own proteases yield mature proteins. 3CL-PRO and PL-PRO proteinases are autocatalytically processed.

The protein localises to the host cytoplasm. It is found in the host nucleus. The protein resides in the host membrane. It localises to the host perinuclear region. Its subcellular location is the host endoplasmic reticulum. The protein localises to the host endoplasmic reticulum-Golgi intermediate compartment. The catalysed reaction is Thiol-dependent hydrolysis of ester, thioester, amide, peptide and isopeptide bonds formed by the C-terminal Gly of ubiquitin (a 76-residue protein attached to proteins as an intracellular targeting signal).. The enzyme catalyses a 5'-end diphospho-ribonucleoside in mRNA + GTP + H(+) = a 5'-end (5'-triphosphoguanosine)-ribonucleoside in mRNA + diphosphate. It catalyses the reaction RNA(n) + a ribonucleoside 5'-triphosphate = RNA(n+1) + diphosphate. It carries out the reaction ATP + H2O = ADP + phosphate + H(+). The catalysed reaction is a 5'-end (5'-triphosphoguanosine)-ribonucleoside in mRNA + S-adenosyl-L-methionine = a 5'-end (N(7)-methyl 5'-triphosphoguanosine)-ribonucleoside in mRNA + S-adenosyl-L-homocysteine. The enzyme catalyses uridylyl-uridylyl-ribonucleotide-RNA = a 3'-end uridylyl-2',3'-cyclophospho-uridine-RNA + a 5'-end dephospho-ribonucleoside-RNA. It catalyses the reaction a 5'-end (N(7)-methyl 5'-triphosphoguanosine)-ribonucleoside in mRNA + S-adenosyl-L-methionine = a 5'-end (N(7)-methyl 5'-triphosphoguanosine)-(2'-O-methyl-ribonucleoside) in mRNA + S-adenosyl-L-homocysteine + H(+). Inhibited by the substrate-analog Cbz-Val-Asn-Ser-Thr-Leu-Gln-CMK. Inhibited by (R)-16. Its function is as follows. Multifunctional protein responsible for the transcription of negative stranded RNA, leader RNA, subgenomic mRNAs and progeny virion RNA as well as proteinases responsible for the cleavage of the polyprotein into functional products. In terms of biological role, plays a role in the inhibition of host interferon and pro-inflammatory cytokines production. Suppresses host RELA/p65 activation by blocking NFKBIA phosphorylation. Targets also the RLR pathway downstream of the IRF3 activation by targeting host CREBBP to proteasomal degradation. Functionally, responsible for the cleavages located at the N-terminus of the replicase polyprotein. Participates together with nsp4 in the assembly of virally-induced cytoplasmic double-membrane vesicles necessary for viral replication. Forms a molecular pore spanning the double membrane of the coronavirus replication organelle. In addition, PLP2 possesses a deubiquitinating/deISGylating activity and processes both 'Lys-48'- and 'Lys-63'-linked polyubiquitin chains from cellular substrates. PLP2 also antagonizes innate immune induction of type I interferon by blocking the nuclear translocation of host IRF-3. Participates in the inhibition of the integrated stress response (ISR) in the infected host cell. Participates in the assembly of virally-induced cytoplasmic double-membrane vesicles necessary for viral replication. Its function is as follows. Responsible for the majority of cleavages as it cleaves the C-terminus of replicase polyprotein at 11 sites. Recognizes substrates containing the core sequence [ILMVF]-Q-|-[SGACN]. Also contains an ADP-ribose-1''-phosphate (ADRP)-binding function. Participates in the inhibition of the integrated stress response (ISR) in the infected host cell. In terms of biological role, plays a role in the initial induction of autophagosomes from host endoplasmic reticulum. Later, limits the expansion of these phagosomes that are no longer able to deliver viral components to lysosomes. Functionally, plays a role in viral RNA synthesis. Forms a hexadecamer with nsp8 (8 subunits of each) that may participate in viral replication by acting as a primase. Alternatively, may synthesize substantially longer products than oligonucleotide primers. Plays a role in viral RNA synthesis. Forms a hexadecamer with nsp7 (8 subunits of each) that may participate in viral replication by acting as a primase. Alternatively, may synthesize substantially longer products than oligonucleotide primers. Its function is as follows. Forms a primer, NSP9-pU, which is utilized by the polymerase for the initiation of RNA chains. Interacts with ribosome signal recognition particle RNA (SRP). Together with NSP8, suppress protein integration into the cell membrane, thereby disrupting host immune defenses. In terms of biological role, plays a pivotal role in viral transcription by stimulating both nsp14 3'-5' exoribonuclease and nsp16 2'-O-methyltransferase activities. Therefore plays an essential role in viral mRNAs cap methylation. Functionally, RNA-directed RNA polymerase that catalyzes the transcription of viral genomic and subgenomic RNAs. Acts in complex with nsp7 and nsp8 to transcribe both the minus and positive strands of genomic RNA. The kinase-like NiRAN domain of NSP12 attaches one or more nucleotides to the amino terminus of NSP9, forming a covalent RNA-protein intermediate that serves as transcription/replication primer. Subgenomic RNAs (sgRNAs) are formed by discontinuous transcription: The polymerase has the ability to pause at transcription-regulating sequences (TRS) and jump to the leader TRS, resulting in a major deletion. This creates a series of subgenomic RNAs that are replicated, transcribed and translated. In addition, Nsp12 is a subunit of the viral RNA capping enzyme that catalyzes the RNA guanylyltransferase reaction for genomic and sub-genomic RNAs. Subsequently, the NiRAN domain transfers RNA to GDP, and forms the core cap structure GpppA-RNA. Plays a role in viral RNA synthesis. Multi-functional protein with a zinc-binding domain in N-terminus displaying RNA and DNA duplex-unwinding activities with 5' to 3' polarity. ATPase activity is strongly stimulated by poly(U), poly(dT), poly(C), poly(dA), but not by poly(G). Its function is as follows. Plays a role in viral RNA synthesis through two distinct activities. The N7-guanine methyltransferase activity plays a role in the formation of the cap structure GpppA-RNA. The proofreading exoribonuclease reduces the sensitivity of the virus to RNA mutagens during replication. This activity acts on both ssRNA and dsRNA in a 3'-5' direction. In terms of biological role, plays a role in viral transcription/replication and prevents the simultaneous activation of host cell dsRNA sensors, such as MDA5/IFIH1, OAS, and PKR. Acts by degrading the 5'-polyuridines generated during replication of the poly(A) region of viral genomic and subgenomic RNAs. Catalyzes a two-step reaction in which a 2'3'-cyclic phosphate (2'3'-cP) is first generated by 2'-O transesterification, which is then hydrolyzed to a 3'-phosphate (3'-P). If not degraded, poly(U) RNA would hybridize with poly(A) RNA tails and activate host dsRNA sensors. Decreases the RNA levels and thus the expression of host TBK1 and IRF3, antagonizing the host innate response. The protein is Replicase polyprotein 1ab (rep) of Sus scrofa (Pig).